The sequence spans 169 residues: Glutathione peroxidase (169 aa).

Sec43 is a catalytic residue. A non-standard amino acid (selenocysteine) is located at residue Sec43.

The protein belongs to the glutathione peroxidase family.

The catalysed reaction is 2 glutathione + H2O2 = glutathione disulfide + 2 H2O. The chain is Glutathione peroxidase (GPX1) from Schistosoma mansoni (Blood fluke).